Consider the following 316-residue polypeptide: Coproporphyrin III ferrochelatase (316 aa).

Residues Y13, R30, 46–47 (RY), S54, and Y125 contribute to the Fe-coproporphyrin III site. Fe(2+) contacts are provided by H183 and E264.

Belongs to the ferrochelatase family.

Its subcellular location is the cytoplasm. The catalysed reaction is Fe-coproporphyrin III + 2 H(+) = coproporphyrin III + Fe(2+). The protein operates within porphyrin-containing compound metabolism; protoheme biosynthesis. Involved in coproporphyrin-dependent heme b biosynthesis. Catalyzes the insertion of ferrous iron into coproporphyrin III to form Fe-coproporphyrin III. The sequence is that of Coproporphyrin III ferrochelatase from Geobacillus kaustophilus (strain HTA426).